Reading from the N-terminus, the 520-residue chain is GMP synthase [glutamine-hydrolyzing] (520 aa).

One can recognise a Glutamine amidotransferase type-1 domain in the interval 9–202 (TILIIDFGSQ…VHRIVGVKPG (194 aa)). C86 functions as the Nucleophile in the catalytic mechanism. Active-site residues include H176 and E178. The 193-residue stretch at 203–395 (WTMGAYREQA…LGLPDSFIGR (193 aa)) folds into the GMPS ATP-PPase domain. 230–236 (SGGVDSS) contacts ATP.

As to quaternary structure, homodimer.

The enzyme catalyses XMP + L-glutamine + ATP + H2O = GMP + L-glutamate + AMP + diphosphate + 2 H(+). Its pathway is purine metabolism; GMP biosynthesis; GMP from XMP (L-Gln route): step 1/1. Catalyzes the synthesis of GMP from XMP. This chain is GMP synthase [glutamine-hydrolyzing], found in Brucella ovis (strain ATCC 25840 / 63/290 / NCTC 10512).